The primary structure comprises 98 residues: Bombyxin A-3 homolog (98 aa).

A signal peptide spans 1–18; sequence MRTQVLFLVLEVAAMASG. 3 cysteine pairs are disulfide-bonded: Cys-26–Cys-85, Cys-38–Cys-98, and Cys-84–Cys-89. Positions 47–75 are cleaved as a propeptide — c peptide like; sequence TPYTSSESEGYGWRWLAPQRARQLAGARG.

It belongs to the insulin family. In terms of assembly, heterodimer of a B chain and an A chain linked by two disulfide bonds.

The protein resides in the secreted. Its function is as follows. Brain peptide responsible for activation of prothoracic glands to produce ecdysone in insects. The polypeptide is Bombyxin A-3 homolog (SBXA3) (Samia cynthia (Ailanthus silkmoth)).